A 1639-amino-acid chain; its full sequence is Peroxide stress-activated histidine kinase mak1 (1639 aa).

Over residues 38-49 the composition is skewed to polar residues; sequence SFTNSQNSSVGS. Positions 38–76 are disordered; it reads SFTNSQNSSVGSVHSPILESPTSLNRQHRNSFSFNNVSS. Over residues 67 to 76 the composition is skewed to low complexity; the sequence is NSFSFNNVSS. One can recognise a PAS 1 domain in the interval 716–786; that stretch reads PFPLLKVIID…NDWKSSLFSG (71 aa). Residues 789 to 841 form the PAC 1 domain; sequence FYHEIRLQRFDNVYRYFICRAVPLRDCTGSVLHFFGTMTDVHDQKLAERELQK. The PAS 2 domain maps to 848-920; it reads NENSYRSLAE…ESLEGTFNNQ (73 aa). A PAC 2 domain is found at 929–982; sequence FAAEIRFRSTDGHYRWHLVKSVCVNNSADTSTNLWLGTCTDIHDHKMLEEKLQE. One can recognise a Histidine kinase domain in the interval 1000–1223; sequence NMSHEIRTPL…RFMWTATFTM (224 aa). His-1003 carries the phosphohistidine; by autocatalysis modification. The 123-residue stretch at 1507–1629 folds into the Response regulatory domain; sequence SVLLAEDNII…HLSLIISGIL (123 aa). Position 1559 is a 4-aspartylphosphate (Asp-1559).

Its subcellular location is the cytoplasm. The enzyme catalyses ATP + protein L-histidine = ADP + protein N-phospho-L-histidine.. Involved in the control of the SAPK-dependent transcriptional response to peroxide stress. Also has a role in G2/M regulation. This Schizosaccharomyces pombe (strain 972 / ATCC 24843) (Fission yeast) protein is Peroxide stress-activated histidine kinase mak1 (mak1).